A 153-amino-acid polypeptide reads, in one-letter code: Endoribonuclease YbeY (153 aa).

His114, His118, and His124 together coordinate Zn(2+).

This sequence belongs to the endoribonuclease YbeY family. The cofactor is Zn(2+).

The protein resides in the cytoplasm. In terms of biological role, single strand-specific metallo-endoribonuclease involved in late-stage 70S ribosome quality control and in maturation of the 3' terminus of the 16S rRNA. The sequence is that of Endoribonuclease YbeY from Finegoldia magna (strain ATCC 29328 / DSM 20472 / WAL 2508) (Peptostreptococcus magnus).